A 134-amino-acid chain; its full sequence is UPF0756 membrane protein YeaL (134 aa).

4 helical membrane passes run 14-34 (ALGFISHNTTVAVSILVLIIV), 51-71 (LTVGIIILTIGVMAPIASGTL), 86-106 (LVAIAVGVFVSWLGGRGITLM), and 110-130 (PQLVAGLLVGTVLGVALFRGV).

The protein belongs to the UPF0756 family.

It localises to the cell membrane. In Salmonella typhimurium (strain LT2 / SGSC1412 / ATCC 700720), this protein is UPF0756 membrane protein YeaL.